The chain runs to 153 residues: Putative WASP homolog-associated protein with actin, membranes and microtubules-like protein 1 (153 aa).

Positions 113–151 (AIQFYEIQLELYEVKFEILKNKEILLTTQLDSLERLIKD) form a coiled coil.

The protein is Putative WASP homolog-associated protein with actin, membranes and microtubules-like protein 1 (WHAMMP3) of Homo sapiens (Human).